The following is a 226-amino-acid chain: Thiopurine S-methyltransferase (226 aa).

The S-adenosyl-L-methionine site is built by W10, L47, E68, and R130.

This sequence belongs to the class I-like SAM-binding methyltransferase superfamily. TPMT family.

It is found in the cytoplasm. It carries out the reaction S-adenosyl-L-methionine + a thiopurine = S-adenosyl-L-homocysteine + a thiopurine S-methylether.. This Shewanella sediminis (strain HAW-EB3) protein is Thiopurine S-methyltransferase.